Consider the following 214-residue polypeptide: Dephospho-CoA kinase (214 aa).

Residues lysine 3 to alanine 202 enclose the DPCK domain. Glycine 11–arginine 16 is an ATP binding site.

The protein belongs to the CoaE family.

It localises to the cytoplasm. It catalyses the reaction 3'-dephospho-CoA + ATP = ADP + CoA + H(+). It functions in the pathway cofactor biosynthesis; coenzyme A biosynthesis; CoA from (R)-pantothenate: step 5/5. Catalyzes the phosphorylation of the 3'-hydroxyl group of dephosphocoenzyme A to form coenzyme A. This is Dephospho-CoA kinase from Bordetella bronchiseptica (strain ATCC BAA-588 / NCTC 13252 / RB50) (Alcaligenes bronchisepticus).